A 314-amino-acid polypeptide reads, in one-letter code: DNA-directed RNA polymerase subunit alpha (314 aa).

The segment at 1–228 (MAQYTIECVE…DQLRPLQEIT (228 aa)) is alpha N-terminal domain (alpha-NTD). The segment at 241–314 (NTVGQVPIEE…SLPKDKPARS (74 aa)) is alpha C-terminal domain (alpha-CTD).

Belongs to the RNA polymerase alpha chain family. In terms of assembly, in cyanobacteria the RNAP catalytic core is composed of 2 alpha, 1 beta, 1 beta', 1 gamma and 1 omega subunit. When a sigma factor is associated with the core the holoenzyme is formed, which can initiate transcription.

It catalyses the reaction RNA(n) + a ribonucleoside 5'-triphosphate = RNA(n+1) + diphosphate. DNA-dependent RNA polymerase catalyzes the transcription of DNA into RNA using the four ribonucleoside triphosphates as substrates. The protein is DNA-directed RNA polymerase subunit alpha of Gloeobacter violaceus (strain ATCC 29082 / PCC 7421).